The sequence spans 282 residues: Pantothenate synthetase (282 aa).

Position 30–37 (30–37 (MGYLHEGH)) interacts with ATP. Residue histidine 37 is the Proton donor of the active site. (R)-pantoate is bound at residue glutamine 61. Glutamine 61 contributes to the beta-alanine binding site. 147–150 (GMKD) lines the ATP pocket. Glutamine 153 serves as a coordination point for (R)-pantoate. Residues valine 176 and 184-187 (KSSR) each bind ATP.

This sequence belongs to the pantothenate synthetase family. In terms of assembly, homodimer.

The protein localises to the cytoplasm. The catalysed reaction is (R)-pantoate + beta-alanine + ATP = (R)-pantothenate + AMP + diphosphate + H(+). It functions in the pathway cofactor biosynthesis; (R)-pantothenate biosynthesis; (R)-pantothenate from (R)-pantoate and beta-alanine: step 1/1. Catalyzes the condensation of pantoate with beta-alanine in an ATP-dependent reaction via a pantoyl-adenylate intermediate. This Bacillus thuringiensis subsp. konkukian (strain 97-27) protein is Pantothenate synthetase.